The following is a 1090-amino-acid chain: Exocyst complex component SEC5B (1090 aa).

A compositionally biased stretch (acidic residues) spans 1-12; it reads MSSSDDLDEDEL. Positions 1–126 are disordered; that stretch reads MSSSDDLDED…ARKEDDRAWD (126 aa). Positions 23-46 are enriched in polar residues; the sequence is RDVTYQKPPSANSRKPVTNLVQQP. Low complexity predominate over residues 52 to 62; the sequence is AAAPPSKGGAK. Positions 96–109 are enriched in gly residues; the sequence is GGGGDGGGGRGRGG. Positions 110 to 126 are enriched in basic and acidic residues; it reads SGKERGRARKEDDRAWD. Residue Ser179 is modified to Phosphoserine. The span at 486–502 shows a compositional bias: polar residues; sequence VQLSDDTSSMEDNQVQV. 3 disordered regions span residues 486–511, 984–1013, and 1055–1090; these read VQLSDDTSSMEDNQVQVDQPLEESAR, ETVENNPGGHQRKPTRGSEDAISDDKQSSV, and PVAKAAYSRTSTDSPSRNYRESQPMGSPVQARPRRR. Residues 999–1010 are compositionally biased toward basic and acidic residues; it reads RGSEDAISDDKQ. Over residues 1062-1071 the composition is skewed to polar residues; the sequence is SRTSTDSPSR.

The protein belongs to the SEC5 family. In terms of assembly, the exocyst complex is composed of SEC3, SEC5, SEC6, SEC8, SEC10, EXO70A1 and EXO84B.

In terms of biological role, component of the exocyst complex involved in the docking of exocytic vesicles with fusion sites on the plasma membrane during regulated or polarized secretion. Involved in polarized cell growth and organ morphogenesis. During cytokinesis, involved in cell plate initiation, cell plate maturation and formation of new primary cell wall. This Arabidopsis thaliana (Mouse-ear cress) protein is Exocyst complex component SEC5B (SEC5B).